A 191-amino-acid chain; its full sequence is ATP synthase subunit b 1 (191 aa).

Residues 7 to 25 (RMRILCLCATTLLMAGSAL) traverse the membrane as a helical segment.

The protein belongs to the ATPase B chain family. As to quaternary structure, F-type ATPases have 2 components, F(1) - the catalytic core - and F(0) - the membrane proton channel. F(1) has five subunits: alpha(3), beta(3), gamma(1), delta(1), epsilon(1). F(0) has three main subunits: a(1), b(2) and c(10-14). The alpha and beta chains form an alternating ring which encloses part of the gamma chain. F(1) is attached to F(0) by a central stalk formed by the gamma and epsilon chains, while a peripheral stalk is formed by the delta and b chains.

The protein resides in the cell inner membrane. F(1)F(0) ATP synthase produces ATP from ADP in the presence of a proton or sodium gradient. F-type ATPases consist of two structural domains, F(1) containing the extramembraneous catalytic core and F(0) containing the membrane proton channel, linked together by a central stalk and a peripheral stalk. During catalysis, ATP synthesis in the catalytic domain of F(1) is coupled via a rotary mechanism of the central stalk subunits to proton translocation. Its function is as follows. Component of the F(0) channel, it forms part of the peripheral stalk, linking F(1) to F(0). The sequence is that of ATP synthase subunit b 1 from Syntrophotalea carbinolica (strain DSM 2380 / NBRC 103641 / GraBd1) (Pelobacter carbinolicus).